Reading from the N-terminus, the 611-residue chain is MSKIIGIDLGTTNSCVAVMEGGEPKVIPNPEGNRTTPSVVAFKNEERQVGEVAKRQAITNPNTIMSVKRHMGTDYKVEVEGKDYTPQEISAIILQNLKASAEAYLGETVTKAVITVPAYFNDAERQATKDAGRIAGLEVERIINEPTAAALAYGLEKQDEEQKILVYDLGGGTFDVSILELADGTFEVISTAGDNRLGGDDFDQVIIDHLVAEFKKENNIDLSQDKMALQRLKDAAEKAKKDLSGVTQTQISLPFISAGAAGPLHLELTLTRAKFEELSAGLVERTLEPTRRALKDAGFAPSELDKVILVGGSTRIPAVQEAIKRETGKEPYKGVNPDEVVALGAAVQGGVLTGDVEGVLLLDVTPLSLGIETMGGVFTKLIERNTTIPTSKSQVFSTAADNQPAVDIHVLQGERPMSADNKTLGRFQLTDLPPAPRGIPQIEVTFDIDANGIVNVRAKDLGTSKEQAITIQSSSGLSDEEVERMVQEAEANADADQKRKEEVELRNEADQLVFQTDKVVKDLEGKVDAAEVAKATEAKEALQAAIEKNELEEIRAKKDALQEIVQQLTVKLYEQAQAAAGQAEGAQGAQDAGAKKDNVVDAEFEEVKEDK.

Residue Thr173 is modified to Phosphothreonine; by autocatalysis. The segment covering 579-592 (AAGQAEGAQGAQDA) has biased composition (low complexity). A disordered region spans residues 579–598 (AAGQAEGAQGAQDAGAKKDN).

It belongs to the heat shock protein 70 family.

Functionally, acts as a chaperone. The protein is Chaperone protein DnaK of Bacillus cereus (strain B4264).